The chain runs to 573 residues: Dihydroxy-acid dehydratase (573 aa).

Positions 1–14 (MTEKSPKPHKRSDA) are enriched in basic and acidic residues. The segment at 1–21 (MTEKSPKPHKRSDAITEGPNR) is disordered. Residue C55 participates in [2Fe-2S] cluster binding. Residue D87 participates in Mg(2+) binding. C128 lines the [2Fe-2S] cluster pocket. Mg(2+) contacts are provided by D129 and K130. K130 bears the N6-carboxylysine mark. Residue C200 participates in [2Fe-2S] cluster binding. Residue E450 participates in Mg(2+) binding. The active-site Proton acceptor is S476.

It belongs to the IlvD/Edd family. In terms of assembly, homodimer. Requires [2Fe-2S] cluster as cofactor. Mg(2+) is required as a cofactor.

The enzyme catalyses (2R)-2,3-dihydroxy-3-methylbutanoate = 3-methyl-2-oxobutanoate + H2O. It carries out the reaction (2R,3R)-2,3-dihydroxy-3-methylpentanoate = (S)-3-methyl-2-oxopentanoate + H2O. It participates in amino-acid biosynthesis; L-isoleucine biosynthesis; L-isoleucine from 2-oxobutanoate: step 3/4. Its pathway is amino-acid biosynthesis; L-valine biosynthesis; L-valine from pyruvate: step 3/4. Functions in the biosynthesis of branched-chain amino acids. Catalyzes the dehydration of (2R,3R)-2,3-dihydroxy-3-methylpentanoate (2,3-dihydroxy-3-methylvalerate) into 2-oxo-3-methylpentanoate (2-oxo-3-methylvalerate) and of (2R)-2,3-dihydroxy-3-methylbutanoate (2,3-dihydroxyisovalerate) into 2-oxo-3-methylbutanoate (2-oxoisovalerate), the penultimate precursor to L-isoleucine and L-valine, respectively. This is Dihydroxy-acid dehydratase from Koribacter versatilis (strain Ellin345).